The following is a 157-amino-acid chain: Protein Smg homolog (157 aa).

It belongs to the Smg family.

This is Protein Smg homolog from Aliivibrio fischeri (strain MJ11) (Vibrio fischeri).